Here is a 289-residue protein sequence, read N- to C-terminus: Secretory carrier-associated membrane protein (289 aa).

The interval 1–65 (MAGRYDPNPF…TSTDGKKKER (65 aa)) is disordered. Over 1-123 (MAGRYDPNPF…EIPIHLRTLQ (123 aa)) the chain is Cytoplasmic. The span at 16 to 31 (NPFSNPRSAASATNSR) shows a compositional bias: polar residues. Residues 59-98 (DGKKKERDLQAKEAELRKREQEVRRKEEAIARAGIVIEEK) are a coiled coil. Helical transmembrane passes span 124-144 (YVAF…VVSV), 156-176 (IWFL…ALWY), 191-211 (FGWF…AAVA), and 239-259 (IFYF…IWVI). The Cytoplasmic portion of the chain corresponds to 260–289 (QQVYMHFRGGGKTAEMKREAALGAMGAALR).

The protein belongs to the SCAMP family.

It is found in the cell membrane. Its subcellular location is the cytoplasmic vesicle. The protein localises to the secretory vesicle membrane. Functionally, probably involved in membrane trafficking. The chain is Secretory carrier-associated membrane protein (PSAM2) from Pisum sativum (Garden pea).